The primary structure comprises 728 residues: Glycine--tRNA ligase (728 aa).

Residues 1–32 (MPCLLPTLLRATRAALLLQSPRVVAAPASQRL) constitute a mitochondrion transit peptide. The WHEP-TRS domain occupies 52-108 (LLAPLRLAVRQQGDFVRKLKEDKAPQVDVDRAVAELKARKRVLEAKELALQPKDDIV). K193 carries the N6-acetyllysine modification. E288 contacts glycine. ATP contacts are provided by residues 320-322 (RNE) and 331-332 (RV). Glycine is bound at residue E339. A Phosphotyrosine modification is found at Y442. 446-447 (EI) lines the ATP pocket. K490 carries the post-translational modification N6-acetyllysine. Glycine is bound at residue 565 to 567 (EPS). Residue R572 coordinates ATP. S689 bears the Phosphoserine mark. T725 is subject to Phosphothreonine.

It belongs to the class-II aminoacyl-tRNA synthetase family. As to quaternary structure, homodimer.

It is found in the cytoplasm. Its subcellular location is the mitochondrion. It localises to the cell projection. The protein localises to the axon. The protein resides in the secreted. It is found in the extracellular exosome. It catalyses the reaction tRNA(Gly) + glycine + ATP = glycyl-tRNA(Gly) + AMP + diphosphate. The catalysed reaction is 2 ATP + H(+) = P(1),P(4)-bis(5'-adenosyl) tetraphosphate + diphosphate. Its function is as follows. Catalyzes the ATP-dependent ligation of glycine to the 3'-end of its cognate tRNA, via the formation of an aminoacyl-adenylate intermediate (Gly-AMP). Also produces diadenosine tetraphosphate (Ap4A), a universal pleiotropic signaling molecule needed for cell regulation pathways, by direct condensation of 2 ATPs. Thereby, may play a special role in Ap4A homeostasis. In Rattus norvegicus (Rat), this protein is Glycine--tRNA ligase (Gars1).